We begin with the raw amino-acid sequence, 381 residues long: 4-hydroxy-3-methylbut-2-en-1-yl diphosphate synthase (flavodoxin) (381 aa).

[4Fe-4S] cluster is bound by residues Cys280, Cys283, Cys315, and Glu322.

This sequence belongs to the IspG family. It depends on [4Fe-4S] cluster as a cofactor.

The enzyme catalyses (2E)-4-hydroxy-3-methylbut-2-enyl diphosphate + oxidized [flavodoxin] + H2O + 2 H(+) = 2-C-methyl-D-erythritol 2,4-cyclic diphosphate + reduced [flavodoxin]. It functions in the pathway isoprenoid biosynthesis; isopentenyl diphosphate biosynthesis via DXP pathway; isopentenyl diphosphate from 1-deoxy-D-xylulose 5-phosphate: step 5/6. Its function is as follows. Converts 2C-methyl-D-erythritol 2,4-cyclodiphosphate (ME-2,4cPP) into 1-hydroxy-2-methyl-2-(E)-butenyl 4-diphosphate. The polypeptide is 4-hydroxy-3-methylbut-2-en-1-yl diphosphate synthase (flavodoxin) (Clavibacter sepedonicus (Clavibacter michiganensis subsp. sepedonicus)).